The chain runs to 207 residues: Imidazole glycerol phosphate synthase subunit HisH (207 aa).

The Glutamine amidotransferase type-1 domain maps to 1–207 (MIAIVDYNMG…ENFTKYRNLK (207 aa)). The Nucleophile role is filled by cysteine 79. Catalysis depends on residues histidine 185 and glutamate 187.

Heterodimer of HisH and HisF.

The protein localises to the cytoplasm. The enzyme catalyses 5-[(5-phospho-1-deoxy-D-ribulos-1-ylimino)methylamino]-1-(5-phospho-beta-D-ribosyl)imidazole-4-carboxamide + L-glutamine = D-erythro-1-(imidazol-4-yl)glycerol 3-phosphate + 5-amino-1-(5-phospho-beta-D-ribosyl)imidazole-4-carboxamide + L-glutamate + H(+). It carries out the reaction L-glutamine + H2O = L-glutamate + NH4(+). The protein operates within amino-acid biosynthesis; L-histidine biosynthesis; L-histidine from 5-phospho-alpha-D-ribose 1-diphosphate: step 5/9. Functionally, IGPS catalyzes the conversion of PRFAR and glutamine to IGP, AICAR and glutamate. The HisH subunit catalyzes the hydrolysis of glutamine to glutamate and ammonia as part of the synthesis of IGP and AICAR. The resulting ammonia molecule is channeled to the active site of HisF. This is Imidazole glycerol phosphate synthase subunit HisH from Sulfurimonas denitrificans (strain ATCC 33889 / DSM 1251) (Thiomicrospira denitrificans (strain ATCC 33889 / DSM 1251)).